The following is a 361-amino-acid chain: UDP-N-acetylglucosamine--N-acetylmuramyl-(pentapeptide) pyrophosphoryl-undecaprenol N-acetylglucosamine transferase (361 aa).

UDP-N-acetyl-alpha-D-glucosamine-binding residues include Ser199 and Gln290.

Belongs to the glycosyltransferase 28 family. MurG subfamily.

It localises to the cell membrane. It carries out the reaction Mur2Ac(oyl-L-Ala-gamma-D-Glu-L-Lys-D-Ala-D-Ala)-di-trans,octa-cis-undecaprenyl diphosphate + UDP-N-acetyl-alpha-D-glucosamine = beta-D-GlcNAc-(1-&gt;4)-Mur2Ac(oyl-L-Ala-gamma-D-Glu-L-Lys-D-Ala-D-Ala)-di-trans,octa-cis-undecaprenyl diphosphate + UDP + H(+). The protein operates within cell wall biogenesis; peptidoglycan biosynthesis. In terms of biological role, cell wall formation. Catalyzes the transfer of a GlcNAc subunit on undecaprenyl-pyrophosphoryl-MurNAc-pentapeptide (lipid intermediate I) to form undecaprenyl-pyrophosphoryl-MurNAc-(pentapeptide)GlcNAc (lipid intermediate II). This is UDP-N-acetylglucosamine--N-acetylmuramyl-(pentapeptide) pyrophosphoryl-undecaprenol N-acetylglucosamine transferase from Streptococcus mutans serotype c (strain ATCC 700610 / UA159).